The following is a 935-amino-acid chain: Protocadherin gamma-A11 (935 aa).

A signal peptide spans 1–29 (MANRLQRGDRSRLLLLLCIFLGTLRGFRA). Cadherin domains follow at residues 30–134 (RQIR…APSF), 135–243 (QEDE…IPMF), 244–348 (TQSV…APEI), 349–453 (TITS…PPVF), 454–563 (PHSS…APEI), and 571–677 (DGST…ADLG). The Extracellular portion of the chain corresponds to 30 to 693 (RQIRYSVPEE…NSETSDLSLY (664 aa)). The N-linked (GlcNAc...) asparagine glycan is linked to Asn-48. 4 N-linked (GlcNAc...) asparagine glycosylation sites follow: Asn-255, Asn-266, Asn-420, and Asn-546. The helical transmembrane segment at 694–714 (LVVAVAAVSCIFLVFVIVLLA) threads the bilayer. Residues 715–935 (LRLWRWHKSR…KKKSGKKEKK (221 aa)) are Cytoplasmic-facing. 2 disordered regions span residues 805–844 (CDPT…WPNN) and 905–935 (ATLT…KEKK). Polar residues predominate over residues 807 to 844 (PTSNQQAPPNTDWRFSQAQRPGTSGSQNGDDTGTWPNN). A compositionally biased stretch (basic residues) spans 925 to 935 (NKKKSGKKEKK).

Its subcellular location is the cell membrane. Potential calcium-dependent cell-adhesion protein. May be involved in the establishment and maintenance of specific neuronal connections in the brain. The protein is Protocadherin gamma-A11 (PCDHGA11) of Homo sapiens (Human).